The primary structure comprises 82 residues: U1-theraphotoxin-Ct1b (82 aa).

Residues 1-23 (MRTFTLIAILTCALLVIYHAAEA) form the signal peptide. Positions 24–44 (EELEAKDVIESKALATLDEER) are excised as a propeptide.

It belongs to the neurotoxin 12 (Hwtx-2) family. 03 (juruin) subfamily. Contains 3 disulfide bonds. Two different connectivities are observed in similar proteins (C1-C3, C2-C5, C4-C6 or C1-C4, C2-C5, C3-C6). Expressed by the venom gland.

It localises to the secreted. Functionally, this toxin causes paralysis and death to sheep blowflies. It does not target insect sodium channels. The chain is U1-theraphotoxin-Ct1b from Coremiocnemis tropix (Australian tarantula spider).